The sequence spans 204 residues: Imidazoleglycerol-phosphate dehydratase (204 aa).

It belongs to the imidazoleglycerol-phosphate dehydratase family.

The protein resides in the cytoplasm. It catalyses the reaction D-erythro-1-(imidazol-4-yl)glycerol 3-phosphate = 3-(imidazol-4-yl)-2-oxopropyl phosphate + H2O. It participates in amino-acid biosynthesis; L-histidine biosynthesis; L-histidine from 5-phospho-alpha-D-ribose 1-diphosphate: step 6/9. This Rhodococcus erythropolis (strain PR4 / NBRC 100887) protein is Imidazoleglycerol-phosphate dehydratase.